The chain runs to 388 residues: Succinate--CoA ligase [ADP-forming] subunit beta (388 aa).

The ATP-grasp domain occupies 9–244 (KEILRKFGVA…LDEEDPAEIE (236 aa)). ATP contacts are provided by residues Lys-46, 53 to 55 (GRG), Glu-99, Ala-102, and Glu-107. 2 residues coordinate Mg(2+): Asn-199 and Asp-213. Residues Asn-264 and 321–323 (GIM) contribute to the substrate site.

Belongs to the succinate/malate CoA ligase beta subunit family. Heterotetramer of two alpha and two beta subunits. Mg(2+) serves as cofactor.

It carries out the reaction succinate + ATP + CoA = succinyl-CoA + ADP + phosphate. The catalysed reaction is GTP + succinate + CoA = succinyl-CoA + GDP + phosphate. The protein operates within carbohydrate metabolism; tricarboxylic acid cycle; succinate from succinyl-CoA (ligase route): step 1/1. In terms of biological role, succinyl-CoA synthetase functions in the citric acid cycle (TCA), coupling the hydrolysis of succinyl-CoA to the synthesis of either ATP or GTP and thus represents the only step of substrate-level phosphorylation in the TCA. The beta subunit provides nucleotide specificity of the enzyme and binds the substrate succinate, while the binding sites for coenzyme A and phosphate are found in the alpha subunit. The protein is Succinate--CoA ligase [ADP-forming] subunit beta of Burkholderia cenocepacia (strain HI2424).